A 240-amino-acid chain; its full sequence is Uridylate kinase (240 aa).

14–17 (KLSG) contributes to the ATP binding site. Residue G56 participates in UMP binding. ATP-binding residues include G57 and R61. UMP-binding positions include D76 and 137–144 (TGNPFFTT). Residues T164, Y170, and D173 each contribute to the ATP site.

The protein belongs to the UMP kinase family. As to quaternary structure, homohexamer.

It localises to the cytoplasm. It carries out the reaction UMP + ATP = UDP + ADP. It functions in the pathway pyrimidine metabolism; CTP biosynthesis via de novo pathway; UDP from UMP (UMPK route): step 1/1. Its activity is regulated as follows. Inhibited by UTP. Catalyzes the reversible phosphorylation of UMP to UDP. This chain is Uridylate kinase, found in Verminephrobacter eiseniae (strain EF01-2).